A 188-amino-acid chain; its full sequence is uncharacterized protein (188 aa).

A signal peptide spans 1 to 18; the sequence is MTLRIIAHLLALTASLAG. Cysteine 19 is lipidated: N-palmitoyl cysteine. A lipid anchor (S-diacylglycerol cysteine) is attached at cysteine 19.

The protein resides in the cell membrane. This is an uncharacterized protein from Sinorhizobium fredii (strain NBRC 101917 / NGR234).